Here is a 478-residue protein sequence, read N- to C-terminus: JmjC domain-containing histone demethylation protein 1 (478 aa).

The PHD-type zinc finger occupies 6 to 70; the sequence is VKCHFCKKDD…HVESFKCTLH (65 aa). Residues 242-401 form the JmjC domain; that stretch reads SHVESFKDGI…TQLNVVEIEH (160 aa). Residue threonine 294 coordinates substrate. 2 residues coordinate Fe cation: histidine 297 and aspartate 299. Lysine 314 provides a ligand contact to substrate. Residue histidine 369 coordinates Fe cation.

This sequence belongs to the JHDM1 histone demethylase family. Requires Fe(2+) as cofactor.

The protein resides in the nucleus. It catalyses the reaction N(6),N(6)-dimethyl-L-lysyl(36)-[histone H3] + 2 2-oxoglutarate + 2 O2 = L-lysyl(36)-[histone H3] + 2 formaldehyde + 2 succinate + 2 CO2. Its function is as follows. Histone demethylase that specifically demethylates 'Lys-36' of histone H3, thereby playing a central role in histone code. The protein is JmjC domain-containing histone demethylation protein 1 (JHD1) of Kluyveromyces lactis (strain ATCC 8585 / CBS 2359 / DSM 70799 / NBRC 1267 / NRRL Y-1140 / WM37) (Yeast).